Reading from the N-terminus, the 404-residue chain is Argininosuccinate synthase (404 aa).

Residues 10–18 (AYSGGLDTS) and Ala37 contribute to the ATP site. Positions 88 and 93 each coordinate L-citrulline. ATP is bound at residue Gly118. L-aspartate is bound by residues Thr120, Asn124, and Asp125. Asn124 contributes to the L-citrulline binding site. L-citrulline contacts are provided by Arg128, Ser178, Ser187, Glu263, and Tyr275.

The protein belongs to the argininosuccinate synthase family. Type 1 subfamily. Homotetramer.

The protein resides in the cytoplasm. It carries out the reaction L-citrulline + L-aspartate + ATP = 2-(N(omega)-L-arginino)succinate + AMP + diphosphate + H(+). It functions in the pathway amino-acid biosynthesis; L-arginine biosynthesis; L-arginine from L-ornithine and carbamoyl phosphate: step 2/3. This is Argininosuccinate synthase from Hahella chejuensis (strain KCTC 2396).